Here is a 251-residue protein sequence, read N- to C-terminus: YlmG homolog protein 2, chloroplastic (251 aa).

A chloroplast-targeting transit peptide spans 1-51; that stretch reads MEASANEPAMKSLKSNPSGPIPNFFVSLSSAFTQTPLVRSNKPNLLLLPPV. A run of 2 helical transmembrane segments spans residues 119–139 and 183–203; these read GFAAVLPGDSVAGLVVANGLI and FIPPLGGLDLSPILAFLVLNA. A compositionally biased stretch (basic residues) spans 232–243; the sequence is VRRRRLSSHKDH. The segment at 232 to 251 is disordered; that stretch reads VRRRRLSSHKDHRPSSASMT.

This sequence belongs to the YggT family.

The protein localises to the plastid. The protein resides in the chloroplast thylakoid membrane. In terms of biological role, not required for the biogenesis and accumulation of native cytochrome b6 in the thylakoid membrane. Not functionally involved in the pathway for covalent binding of the c-type heme to cytochrome b6. This Arabidopsis thaliana (Mouse-ear cress) protein is YlmG homolog protein 2, chloroplastic.